The following is a 189-amino-acid chain: Large ribosomal subunit protein uL6 (189 aa).

This sequence belongs to the universal ribosomal protein uL6 family. Part of the 50S ribosomal subunit.

Its function is as follows. This protein binds to the 23S rRNA, and is important in its secondary structure. It is located near the subunit interface in the base of the L7/L12 stalk, and near the tRNA binding site of the peptidyltransferase center. The polypeptide is Large ribosomal subunit protein uL6 (Bacteroides thetaiotaomicron (strain ATCC 29148 / DSM 2079 / JCM 5827 / CCUG 10774 / NCTC 10582 / VPI-5482 / E50)).